Consider the following 265-residue polypeptide: uncharacterized protein (265 aa).

Residue Ser223 is modified to Phosphoserine.

This is an uncharacterized protein from Saccharomyces cerevisiae (strain ATCC 204508 / S288c) (Baker's yeast).